The sequence spans 371 residues: 4-hydroxy-3-methylbut-2-en-1-yl diphosphate synthase (flavodoxin) (371 aa).

[4Fe-4S] cluster is bound by residues cysteine 270, cysteine 273, cysteine 305, and glutamate 312.

The protein belongs to the IspG family. [4Fe-4S] cluster is required as a cofactor.

It catalyses the reaction (2E)-4-hydroxy-3-methylbut-2-enyl diphosphate + oxidized [flavodoxin] + H2O + 2 H(+) = 2-C-methyl-D-erythritol 2,4-cyclic diphosphate + reduced [flavodoxin]. It participates in isoprenoid biosynthesis; isopentenyl diphosphate biosynthesis via DXP pathway; isopentenyl diphosphate from 1-deoxy-D-xylulose 5-phosphate: step 5/6. In terms of biological role, converts 2C-methyl-D-erythritol 2,4-cyclodiphosphate (ME-2,4cPP) into 1-hydroxy-2-methyl-2-(E)-butenyl 4-diphosphate. This Chromohalobacter salexigens (strain ATCC BAA-138 / DSM 3043 / CIP 106854 / NCIMB 13768 / 1H11) protein is 4-hydroxy-3-methylbut-2-en-1-yl diphosphate synthase (flavodoxin).